Reading from the N-terminus, the 276-residue chain is METLELQGAKLRYHQVGQGPVLIFIPGANGTGDIFLPLAEQLKDHFTVVAVDRRDYGESELTEPLPDSASNPDSDYRVKRDAQDIAELAKSLSDEPVYILGSSSGSIVAMHVLKDYPEVVKKIAFHEPPINTFLPDSTYWKDKNDDIVHQILTEGLEKGMKTFGETLNIAPIDAKMMSQPADTEEGRIEQYKRTMFWSEFEIRQYTHSDITLDDFTKYSDKITLLNGTDSRGSFPQDVNFYINKETSIPIVDIPGGHLGYIQKPEGFADVLLNMWG.

The region spanning 20-137 (PVLIFIPGAN…PPINTFLPDS (118 aa)) is the AB hydrolase-1 domain. The interval 57–76 (GESELTEPLPDSASNPDSDY) is disordered.

The protein belongs to the AB hydrolase superfamily.

This is an uncharacterized protein from Staphylococcus aureus (strain MW2).